A 198-amino-acid chain; its full sequence is Ribonuclease HII (198 aa).

Residues 11 to 198 (TCIAGVDEVG…APVKRALGLA (188 aa)) form the RNase H type-2 domain. Asp17, Glu18, and Asp109 together coordinate a divalent metal cation.

The protein belongs to the RNase HII family. The cofactor is Mn(2+). Mg(2+) serves as cofactor.

Its subcellular location is the cytoplasm. The enzyme catalyses Endonucleolytic cleavage to 5'-phosphomonoester.. Its function is as follows. Endonuclease that specifically degrades the RNA of RNA-DNA hybrids. This Pectobacterium carotovorum subsp. carotovorum (strain PC1) protein is Ribonuclease HII.